The sequence spans 595 residues: MRTHYCGQVNSNNIEETVNLCGWVDRRRDHGGVIFLDLRDRSGLIQIVSDPERTPDSYQIAGDIRNEYVVQITGRVSRRPEESLNPKLPTGEIEIYADDIQLLNGLGKQLPFQVSTAETEAVREELRLKYRYLDLRRERMTRNLLLRHEVIKAIRRFLEDEQNFVEIETPILTRSTPEGARDYLVPSRVHPGEWFALPQSPQLFKQILMVSGFDRYYQIARCFRDEDLRADRQPEFTQLDMEMSFMSQEEILQLNEKLVAYIFQKVKGIDLPLPFPRLTYTEAMERYGSDKPDVRFGLELVDVSDLMKDSGFKVFSGAIAKGGIVKVLPIPGGNDAISNVRIKPGGDLFKEASEVGAKGLAYVRVKEGGKIDTIGAIKDNLTDEQKQELLKRTNAQPGHLLLFAADDANTVNKTLDRLRLVIGEQLGLIDQDKISLLWVTDFPMFEWNEDEQRLEALHHPFTAPHPDDINDLKTARAQAYDLVFNGYEVGGGSLRIYQRDVQEKVFEAIGLSAQEADNKFGFLLEAFEYGTPPHGGIAYGLDRLVMLLAVEESIRDVIAFPKTQQAKCLLANAPSEVDKKQLKELHVSSISKAKS.

An L-aspartate-binding site is contributed by Glu178. The aspartate stretch occupies residues 202–205; that stretch reads QLFK. Arg224 is an L-aspartate binding site. Residues 224 to 226 and Gln233 each bind ATP; that span reads RDE. His458 contacts L-aspartate. Glu488 serves as a coordination point for ATP. Residue Arg495 coordinates L-aspartate. 540–543 contacts ATP; the sequence is GLDR.

It belongs to the class-II aminoacyl-tRNA synthetase family. Type 1 subfamily. As to quaternary structure, homodimer.

It localises to the cytoplasm. It catalyses the reaction tRNA(Asx) + L-aspartate + ATP = L-aspartyl-tRNA(Asx) + AMP + diphosphate. Functionally, aspartyl-tRNA synthetase with relaxed tRNA specificity since it is able to aspartylate not only its cognate tRNA(Asp) but also tRNA(Asn). Reaction proceeds in two steps: L-aspartate is first activated by ATP to form Asp-AMP and then transferred to the acceptor end of tRNA(Asp/Asn). This is Aspartate--tRNA(Asp/Asn) ligase from Trichodesmium erythraeum (strain IMS101).